Here is a 334-residue protein sequence, read N- to C-terminus: MEGRYKDYRIRFSPGWVEVVQDDVTVPSRRALITGATGLLGRAVYKEFKENSWHVLGCGYSRARPRFECLNLLDEAAVKALIQDFKPHVIIHCAAERRPDIVESQPELASLLNVVASENLAKVAAGVGAFLIYVSSDYVFDGTSPPYREDSIPHPLNLYGKTKLDGERAVLQNNEGAAVLRVPVMYGDVEKLSESAVTILFDKVQFSNKSANLDHCQQRFPTHVKDVATVCLQLTERKIQDPSIKGIYHWSGNEQMTKYEIACAMADAFNLPSSHLRPITDEPVGATPRPWNPQLDCSKLEKMGIGQRTPFRVGIRETLWPFLVDKRWRQTVFH.

NADP(+)-binding positions include 37 to 40 (TGLL), 60 to 62 (YSR), 71 to 72 (NL), C93, R97, and Y159. Residues 319–334 (LWPFLVDKRWRQTVFH) form a required for interaction with MAT2A region.

This sequence belongs to the dTDP-4-dehydrorhamnose reductase family. MAT2B subfamily. As to quaternary structure, heterotrimer; composed of a catalytic mat2a homodimer that binds one regulatory mat2b chain. Heterohexamer; composed of a central, catalytic mat2a homotetramer flanked on either side by a regulatory mat2b chain. NADP binding increases the affinity for mat2a.

It participates in amino-acid biosynthesis; S-adenosyl-L-methionine biosynthesis; S-adenosyl-L-methionine from L-methionine: step 1/1. Functionally, regulatory subunit of S-adenosylmethionine synthetase 2, an enzyme that catalyzes the formation of S-adenosylmethionine from methionine and ATP. Regulates MAT2A catalytic activity by changing its kinetic properties, increasing its affinity for L-methionine. Can bind NADP (in vitro). This chain is Methionine adenosyltransferase 2 subunit beta (mat2b), found in Xenopus laevis (African clawed frog).